Reading from the N-terminus, the 397-residue chain is Elongation factor Tu (397 aa).

The tr-type G domain maps to 10 to 207 (KPHVNIGTIG…AVDESIPEPV (198 aa)). Positions 19 to 26 (GHVDHGKT) are G1. 19 to 26 (GHVDHGKT) lines the GTP pocket. Mg(2+) is bound at residue T26. A G2 region spans residues 63 to 67 (GITIN). Residues 84-87 (DAPG) form a G3 region. Residues 84-88 (DAPGH) and 139-142 (NKSD) each bind GTP. The G4 stretch occupies residues 139–142 (NKSD). The interval 177 to 179 (SGL) is G5.

Belongs to the TRAFAC class translation factor GTPase superfamily. Classic translation factor GTPase family. EF-Tu/EF-1A subfamily. As to quaternary structure, monomer.

The protein localises to the cytoplasm. It carries out the reaction GTP + H2O = GDP + phosphate + H(+). GTP hydrolase that promotes the GTP-dependent binding of aminoacyl-tRNA to the A-site of ribosomes during protein biosynthesis. The protein is Elongation factor Tu of Clavibacter michiganensis subsp. michiganensis (strain NCPPB 382).